The chain runs to 63 residues: Large ribosomal subunit protein bL28 (63 aa).

Residues 11–20 (GNNSGASVSH) are compositionally biased toward polar residues. Residues 11 to 30 (GNNSGASVSHSNKKTKRKWK) form a disordered region. Residues 21-30 (SNKKTKRKWK) are compositionally biased toward basic residues.

This sequence belongs to the bacterial ribosomal protein bL28 family.

This chain is Large ribosomal subunit protein bL28, found in Natranaerobius thermophilus (strain ATCC BAA-1301 / DSM 18059 / JW/NM-WN-LF).